The chain runs to 486 residues: Cardiolipin synthase A (486 aa).

Helical transmembrane passes span 3-23 (TFYT…IAGV) and 38-58 (MAWL…YLSF). PLD phosphodiesterase domains follow at residues 219-246 (MDLR…VDPR) and 399-426 (KDGL…DMRS). Residues His224, Lys226, Asp231, His404, Lys406, and Asp411 contribute to the active site.

The protein belongs to the phospholipase D family. Cardiolipin synthase subfamily. ClsA sub-subfamily.

It is found in the cell inner membrane. It catalyses the reaction 2 a 1,2-diacyl-sn-glycero-3-phospho-(1'-sn-glycerol) = a cardiolipin + glycerol. In terms of biological role, catalyzes the reversible phosphatidyl group transfer from one phosphatidylglycerol molecule to another to form cardiolipin (CL) (diphosphatidylglycerol) and glycerol. This chain is Cardiolipin synthase A, found in Pectobacterium carotovorum subsp. carotovorum (strain PC1).